A 143-amino-acid chain; its full sequence is Transcriptional regulator SlyA (143 aa).

The HTH marR-type domain maps to 2–135; it reads ESTLGSDLAR…LSGLIDKLER (134 aa). Positions 49–72 form a DNA-binding region, H-T-H motif; it reads QIQLAKAIGIEQPSLVRTLDQLEE.

It belongs to the SlyA family. As to quaternary structure, homodimer.

Functionally, transcription regulator that can specifically activate or repress expression of target genes. This Yersinia enterocolitica serotype O:8 / biotype 1B (strain NCTC 13174 / 8081) protein is Transcriptional regulator SlyA.